The chain runs to 61 residues: Large ribosomal subunit protein uL30 (61 aa).

Belongs to the universal ribosomal protein uL30 family. Part of the 50S ribosomal subunit.

The protein is Large ribosomal subunit protein uL30 of Corynebacterium urealyticum (strain ATCC 43042 / DSM 7109).